Here is a 300-residue protein sequence, read N- to C-terminus: Delta-9 desaturase-like 4 protein (300 aa).

A run of 2 helical transmembrane segments spans residues 39 to 59 (VVVI…WEAL) and 61 to 81 (FGLV…HRNL). The Histidine box-1 motif lies at 78-83 (HRNLSH). Positions 115–119 (HRFHH) match the Histidine box-2 motif. A run of 2 helical transmembrane segments spans residues 175 to 195 (IAVH…LPYL) and 200 to 220 (GVGI…CHIW). Positions 247–251 (HNNHH) match the Histidine box-3 motif.

This sequence belongs to the fatty acid desaturase type 1 family. Fe cation serves as cofactor.

It is found in the endoplasmic reticulum membrane. Its pathway is lipid metabolism; polyunsaturated fatty acid biosynthesis. The polypeptide is Delta-9 desaturase-like 4 protein (Arabidopsis thaliana (Mouse-ear cress)).